We begin with the raw amino-acid sequence, 590 residues long: Muscarinic acetylcholine receptor M3 (590 aa).

Over 1–67 (MTLHSNSTTS…DPLGGHTVWQ (67 aa)) the chain is Extracellular. N-linked (GlcNAc...) asparagine glycosylation is found at Asn6, Asn15, Asn41, and Asn48. The helical transmembrane segment at 68–91 (VVFIAFLTGILALVTIIGNILVIV) threads the bilayer. Topologically, residues 92-104 (SFKVNKQLKTVNN) are cytoplasmic. Residues 105 to 130 (YFLLSLACADLIIGVISMNLFTTYII) traverse the membrane as a helical segment. Over 131-142 (MNRWALGNLACD) the chain is Extracellular. The cysteines at positions 141 and 221 are disulfide-linked. Residues 143–164 (LWLAIDYVASNASVMNLLVISF) form a helical membrane-spanning segment. Over 165–184 (DRYFSITRPLTYRAKRTTKR) the chain is Cytoplasmic. Residues 185–206 (AGVMIGLAWVISFVLWAPAILF) form a helical membrane-spanning segment. The Extracellular portion of the chain corresponds to 207–229 (WQYFVGKRTVPPGECFIQFLSEP). The helical transmembrane segment at 230 to 252 (TITFGTAIAAFYMPVTIMTILYW) threads the bilayer. Topologically, residues 253-491 (RIYKETEKRT…SLVKEKKAAQ (239 aa)) are cytoplasmic. The Basolateral sorting signal signature appears at 275 to 281 (AETENFV). Positions 323 to 357 (SSEQMDQDHSSSDSWNNNDAAASLENSASSDEEDI) are disordered. A compositionally biased stretch (low complexity) spans 334–345 (SDSWNNNDAAAS). Phosphoserine is present on Ser385. Residues 492-514 (TLSAILLAFIITWTPYNIMVLVN) traverse the membrane as a helical segment. At 515–526 (TFCDSCIPKTFW) the chain is on the extracellular side. The cysteines at positions 517 and 520 are disulfide-linked. A helical membrane pass occupies residues 527-546 (NLGYWLCYINSTVNPVCYAL). The Cytoplasmic segment spans residues 547 to 590 (CNKTFRTTFKMLLLCQCDKKKRRKQQYQQRQSVIFHKRAPEQAL).

This sequence belongs to the G-protein coupled receptor 1 family. Muscarinic acetylcholine receptor subfamily. CHRM3 sub-subfamily. In terms of assembly, homodimer; the dimers can form tetramers. Interacts with NALCN. Interacts with TMEM147.

Its subcellular location is the cell membrane. It is found in the postsynaptic cell membrane. The protein resides in the basolateral cell membrane. The protein localises to the endoplasmic reticulum membrane. Functionally, the muscarinic acetylcholine receptor mediates various cellular responses, including inhibition of adenylate cyclase, breakdown of phosphoinositides and modulation of potassium channels through the action of G proteins. Primary transducing effect is Pi turnover. The sequence is that of Muscarinic acetylcholine receptor M3 (CHRM3) from Pongo pygmaeus (Bornean orangutan).